The sequence spans 196 residues: DnaA initiator-associating protein DiaA (196 aa).

Residues 34–196 (LVQSLLNGNK…DNTLFPHQDD (163 aa)) enclose the SIS domain.

It belongs to the SIS family. DiaA subfamily. As to quaternary structure, homotetramer; dimer of dimers.

Its function is as follows. Required for the timely initiation of chromosomal replication via direct interactions with the DnaA initiator protein. This is DnaA initiator-associating protein DiaA from Shigella flexneri serotype 5b (strain 8401).